The sequence spans 284 residues: Pantothenate synthetase (284 aa).

M30–H37 serves as a coordination point for ATP. The active-site Proton donor is H37. (R)-pantoate is bound at residue Q61. A beta-alanine-binding site is contributed by Q61. G149–D152 contributes to the ATP binding site. Residue Q155 participates in (R)-pantoate binding. ATP is bound by residues V178 and L186–R189.

The protein belongs to the pantothenate synthetase family. As to quaternary structure, homodimer.

Its subcellular location is the cytoplasm. It catalyses the reaction (R)-pantoate + beta-alanine + ATP = (R)-pantothenate + AMP + diphosphate + H(+). The protein operates within cofactor biosynthesis; (R)-pantothenate biosynthesis; (R)-pantothenate from (R)-pantoate and beta-alanine: step 1/1. Catalyzes the condensation of pantoate with beta-alanine in an ATP-dependent reaction via a pantoyl-adenylate intermediate. In Sodalis glossinidius (strain morsitans), this protein is Pantothenate synthetase.